Here is a 364-residue protein sequence, read N- to C-terminus: C3a anaphylatoxin chemotactic receptor (364 aa).

Over 1–50 (MGDNMDFSEHYGNFSENYVTESYGEFDLYYDPLNETSLSEQGHRSIWVLS) the chain is Extracellular. Asparagine 13 and asparagine 34 each carry an N-linked (GlcNAc...) asparagine glycan. Residues 51–71 (IVLCSIACVLGITGNAFVIWI) traverse the membrane as a helical segment. The Cytoplasmic portion of the chain corresponds to 72-82 (AGVKMKRTVNT). Residues 83–103 (IWFVNLAAADLLCCVSIPFSI) traverse the membrane as a helical segment. At 104–120 (ADIILNSHWPYGEAMCK) the chain is on the extracellular side. An intrachain disulfide couples cysteine 119 to cysteine 198. The chain crosses the membrane as a helical span at residues 121 to 141 (ILPSMVVLNMFASVFTLVLIS). Residues 142-159 (LDRFALVILPVWAQNHRS) are Cytoplasmic-facing. A helical transmembrane segment spans residues 160–180 (ITLAWLLCGLVWVLGLLLSLP). Over 181–220 (SMIYREIVVHDDMNITLCIYNHLQDKTEGNQSAIKAIHVT) the chain is Extracellular. Residues 221 to 241 (RLILGFLIPLLVIAVCYLLIG) form a helical membrane-spanning segment. The Cytoplasmic portion of the chain corresponds to 242–256 (RRVSSGRFKSQRAFQ). A helical membrane pass occupies residues 257-277 (IILVVVTTFFVCWLPYHVIGL). Residues 278-295 (VIEYGKEASQVMARALDP) lie on the Extracellular side of the membrane. A helical membrane pass occupies residues 296-316 (LAISLAYVNSCLNPVLYVFMG). Residues 317 to 364 (QDFKERVRVSLRKIFEKVFSEDVTLRSSVYSKGQSQLSRATNSSEAQV) lie on the Cytoplasmic side of the membrane.

The protein belongs to the G-protein coupled receptor 1 family.

It is found in the cell membrane. Functionally, receptor for the chemotactic and inflammatory peptide anaphylatoxin C3a. This receptor stimulates chemotaxis, granule enzyme release and superoxide anion production. This chain is C3a anaphylatoxin chemotactic receptor (c3ar1), found in Oncorhynchus mykiss (Rainbow trout).